The primary structure comprises 92 residues: MVRCRVRSPSESPQQGSGQQRENERQDQDQELRPEDVPVYGRTHRGRYHYRHRSHTRRRRSCRRRRRRACRHRRHRRGCRRIRRRRRCRRRL.

The tract at residues 1 to 76 (MVRCRVRSPS…RRACRHRRHR (76 aa)) is disordered. Over residues 7–20 (RSPSESPQQGSGQQ) the composition is skewed to low complexity. Ser8 and Ser10 each carry phosphoserine. The span at 21 to 36 (RENERQDQDQELRPED) shows a compositional bias: basic and acidic residues. The span at 42 to 76 (RTHRGRYHYRHRSHTRRRRSCRRRRRRACRHRRHR) shows a compositional bias: basic residues.

Belongs to the protamine P2 family. Interacts with TDRP. Proteolytic processing into mature chains is required for histone eviction during spermatogenesis. Transition proteins (TNP1 and TNP2) are required for processing. As to expression, testis.

It is found in the nucleus. It localises to the chromosome. In terms of biological role, protamines substitute for histones in the chromatin of sperm during the haploid phase of spermatogenesis. They compact sperm DNA into a highly condensed, stable and inactive complex. The protein is Protamine-2 (PRM2) of Sus scrofa (Pig).